Consider the following 171-residue polypeptide: Protein phosphatase 1 regulatory subunit 1A (171 aa).

At Met1 the chain carries N-acetylmethionine. The interval 1-171 is disordered; that stretch reads MEQDNSPRKI…PLDSKGANSV (171 aa). An essential for activity region spans residues 9–12; the sequence is KIQF. The span at 19–29 shows a compositional bias: basic and acidic residues; it reads PHLDPEAAEQI. Phosphothreonine; by PKA is present on Thr35. The essential for activity stretch occupies residues 42-54; it reads TSDQSSPEIDEDR. 4 positions are modified to phosphoserine: Ser43, Ser46, Ser47, and Ser67. Over residues 135-157 the composition is skewed to basic and acidic residues; the sequence is KTAECIPKTHERGSKEPSTKEPS. The segment at 143–171 is interaction with PPP1R15A; that stretch reads THERGSKEPSTKEPSTHIPPLDSKGANSV.

The protein belongs to the protein phosphatase inhibitor 1 family. Interacts with PPP1R15A. Post-translationally, phosphorylation of Thr-35 is required for activity.

Functionally, inhibitor of protein-phosphatase 1. This protein may be important in hormonal control of glycogen metabolism. Hormones that elevate intracellular cAMP increase I-1 activity in many tissues. I-1 activation may impose cAMP control over proteins that are not directly phosphorylated by PKA. Following a rise in intracellular calcium, I-1 is inactivated by calcineurin (or PP2B). Does not inhibit type-2 phosphatases. This is Protein phosphatase 1 regulatory subunit 1A (PPP1R1A) from Homo sapiens (Human).